The following is a 64-amino-acid chain: Conotoxin Ts-011 (64 aa).

The signal sequence occupies residues 1–22 (MHCLPVLVILLLLIASTPSVDA). A propeptide spanning residues 23-51 (RPKTKDDVPLASFHGADNANRILRTLWNL) is cleaved from the precursor. An Isoleucine amide modification is found at Ile63.

The protein belongs to the conotoxin T superfamily. Contains 2 disulfide bonds that can be either 'C1-C3, C2-C4' or 'C1-C4, C2-C3', since these disulfide connectivities have been observed for conotoxins with cysteine framework V (for examples, see AC P0DQQ7 and AC P81755). Expressed by the venom duct.

The protein resides in the secreted. In Conus tessulatus (Tessellate cone), this protein is Conotoxin Ts-011.